Reading from the N-terminus, the 133-residue chain is Large-conductance mechanosensitive channel (133 aa).

Transmembrane regions (helical) follow at residues 10–30 (FAMKGNVLDMAVGVVIGTAFG) and 76–96 (GNFIQTAVDFLIIAFCIFCVI).

This sequence belongs to the MscL family. Homopentamer.

The protein localises to the cell inner membrane. In terms of biological role, channel that opens in response to stretch forces in the membrane lipid bilayer. May participate in the regulation of osmotic pressure changes within the cell. In Campylobacter curvus (strain 525.92), this protein is Large-conductance mechanosensitive channel.